A 579-amino-acid chain; its full sequence is Arginine--tRNA ligase (579 aa).

A 'HIGH' region motif is present at residues alanine 127 to histidine 137.

The protein belongs to the class-I aminoacyl-tRNA synthetase family. In terms of assembly, monomer.

Its subcellular location is the cytoplasm. The enzyme catalyses tRNA(Arg) + L-arginine + ATP = L-arginyl-tRNA(Arg) + AMP + diphosphate. The protein is Arginine--tRNA ligase of Acidithiobacillus ferrooxidans (strain ATCC 23270 / DSM 14882 / CIP 104768 / NCIMB 8455) (Ferrobacillus ferrooxidans (strain ATCC 23270)).